The following is an 893-amino-acid chain: Zinc finger protein 281 (893 aa).

4 disordered regions span residues 1-113 (MKIG…FPSQ), 126-148 (IKQE…HHHY), 153-172 (AGAE…SHGV), and 198-251 (SGSR…GAVL). Lysine 2 participates in a covalent cross-link: Glycyl lysine isopeptide (Lys-Gly) (interchain with G-Cter in SUMO2). Positions 7–36 (FLSGGGGPSSSGGSGSGGSSGSASGGSGGG) are enriched in gly residues. Residues lysine 100 and lysine 127 each participate in a glycyl lysine isopeptide (Lys-Gly) (interchain with G-Cter in SUMO2) cross-link. Positions 127–139 (KQEKPADPEEQPS) are enriched in basic and acidic residues. Residues 161-170 (GLGGGEGGSH) show a composition bias toward gly residues. Residues 201 to 216 (RTDEHGNQEPKQDANV) show a composition bias toward basic and acidic residues. Residues lysine 211, lysine 217, lysine 223, lysine 230, lysine 240, and lysine 256 each participate in a glycyl lysine isopeptide (Lys-Gly) (interchain with G-Cter in SUMO2) cross-link. 3 consecutive C2H2-type zinc fingers follow at residues 258–280 (HICD…VLIH), 286–308 (FQCS…EKIH), and 314–336 (FGCD…KRTH). Residues lysine 298 and lysine 322 each participate in a glycyl lysine isopeptide (Lys-Gly) (interchain with G-Cter in SUMO2) cross-link. A C2H2-type 4; atypical zinc finger spans residues 342–364 (YKCDTCQQYFSRTDRLLKHRRTC). Lysine 370 is covalently cross-linked (Glycyl lysine isopeptide (Lys-Gly) (interchain with G-Cter in SUMO2)). The interval 371–425 (GAASAEPGSSNHNSMGNLAVLSQGNTSSSRRKSKSKSIAIENKEHKTGKTNESQM) is disordered. Residues 377–396 (PGSSNHNSMGNLAVLSQGNT) are compositionally biased toward polar residues. Serine 392 bears the Phosphoserine mark. Residues lysine 406, lysine 413, lysine 457, and lysine 474 each participate in a glycyl lysine isopeptide (Lys-Gly) (interchain with G-Cter in SUMO2) cross-link. At serine 481 the chain carries Phosphoserine. Glycyl lysine isopeptide (Lys-Gly) (interchain with G-Cter in SUMO2) cross-links involve residues lysine 490, lysine 495, lysine 536, lysine 596, lysine 614, and lysine 619. The interval 613 to 658 (GKSETQKEDPFNLTEPRVDLHTSGEHSELVQEENLSPGTQTPSNDK) is disordered. Residues 616-641 (ETQKEDPFNLTEPRVDLHTSGEHSEL) show a composition bias toward basic and acidic residues. A compositionally biased stretch (polar residues) spans 645–658 (ENLSPGTQTPSNDK). Serine 648 is subject to Phosphoserine. Residues lysine 658 and lysine 667 each participate in a glycyl lysine isopeptide (Lys-Gly) (interchain with G-Cter in SUMO2) cross-link. Residues 775 to 813 (SSAFQSSSQKLTSQKEQQKNLESSTSFQIPSQELASQID) show a composition bias toward polar residues. Residues 775-815 (SSAFQSSSQKLTSQKEQQKNLESSTSFQIPSQELASQIDPQ) form a disordered region. A Phosphoserine modification is found at serine 782. Glycyl lysine isopeptide (Lys-Gly) (interchain with G-Cter in SUMO2) cross-links involve residues lysine 784, lysine 789, and lysine 793. Serine 805 is modified (phosphoserine). Residues lysine 816 and lysine 838 each participate in a glycyl lysine isopeptide (Lys-Gly) (interchain with G-Cter in SUMO2) cross-link. Threonine 886 is modified (phosphothreonine).

Belongs to the krueppel C2H2-type zinc-finger protein family. Interacts with NANOG. Associates with the NuRD complex.

The protein localises to the nucleus. In terms of biological role, transcription repressor that plays a role in regulation of embryonic stem cells (ESCs) differentiation. Required for ESCs differentiation and acts by mediating autorepression of NANOG in ESCs: binds to the NANOG promoter and promotes association of NANOG protein to its own promoter and recruits the NuRD complex, which deacetylates histones. Not required for establishement and maintenance of ESCs. Represses the transcription of a number of genes including GAST, ODC1 and VIM. Binds to the G-rich box in the enhancer region of these genes. The polypeptide is Zinc finger protein 281 (Znf281) (Mus musculus (Mouse)).